The sequence spans 135 residues: Helix-loop-helix protein 2 (135 aa).

The disordered stretch occupies residues 1 to 81 (MMLSPDQAAD…RRATAKYRSA (81 aa)). The span at 10-21 (DSDHPSSTHSDP) shows a compositional bias: basic and acidic residues. The segment covering 68 to 81 (KRRRRRATAKYRSA) has biased composition (basic residues). The 53-residue stretch at 77–129 (KYRSAHATRERIRVEAFNLAFAELRKLLPTLPPDKKLSKIEILRLAICYISYL) folds into the bHLH domain.

In terms of assembly, homodimer. Interacts and may form heterodimers with STAT3. As to expression, expressed in developing neurons. Transiently expressed in the cerebellum during postnatal development, exclusively in the premigratory zone of the external granule layer where postmitotic neurons undergo initial stages of neuronal differentiation. Expression is not detected in mature neurons. Expressed in the anterior lobe of the adult pituitary.

It is found in the nucleus. Its function is as follows. Transcription factor which binds the E box motif 5'-CA[TC][AG]TG-3'. Involved in regulating energy expenditure, body mass, voluntary physical activity, mating behavior and reproductive longevity, acting through the hypothalamic-pituitary-gonadal axis. Acts as a transcriptional activator of target genes, including Ndn, Pcsk1, Mc4r. Is also a transcriptional activator of KISS1. May act centrally to regulate function of both white and brown adipose tissue. Together with NHLH1, required to maintain migration and survival of cells in the anterior extramural migration stream (aes), which forms the precerebellar nuclei. Also, in concert with Nhlh1, may determine fate of gonadotropin releasing hormone-1 (GnRH-1) neurons. The chain is Helix-loop-helix protein 2 (Nhlh2) from Mus musculus (Mouse).